The primary structure comprises 273 residues: Zinc finger protein 32 (273 aa).

C2H2-type zinc fingers lie at residues 77–99 (YECQ…ERIH), 105–127 (FECT…QRIH), and 133–155 (YQCK…ERLH). Zn(2+) is bound by residues cysteine 79, cysteine 82, histidine 95, histidine 99, cysteine 107, cysteine 110, histidine 123, histidine 127, serine 141, glutamine 144, glycine 157, tyrosine 161, phenylalanine 198, lysine 201, leucine 214, alanine 218, cysteine 247, cysteine 250, histidine 263, and cysteine 267. 2 C2H2-type zinc fingers span residues 161–183 (YECA…RRVH) and 189–211 (YRCD…IRVH). The segment at 217–239 (YACTQCRKSFHTRGNCILHGKIH) adopts a C2H2-type 6 zinc-finger fold. The CCHC-type zinc finger occupies 245–267 (YLCGQCGKSFTQRGSLAVHQRSC).

It belongs to the krueppel C2H2-type zinc-finger protein family.

The protein localises to the nucleus. Functionally, may be involved in transcriptional regulation. The protein is Zinc finger protein 32 (ZNF32) of Homo sapiens (Human).